Reading from the N-terminus, the 161-residue chain is Cytochrome c-type biogenesis protein CcmE (161 aa).

Over 1–8 (MNARRKKR) the chain is Cytoplasmic. A helical; Signal-anchor for type II membrane protein membrane pass occupies residues 9-29 (LALATALIGGVAAIASLLLYA). At 30 to 161 (LNSNLNLFYT…DYNAEQKSGY (132 aa)) the chain is on the periplasmic side. Positions 131 and 135 each coordinate heme.

This sequence belongs to the CcmE/CycJ family.

Its subcellular location is the cell inner membrane. Its function is as follows. Heme chaperone required for the biogenesis of c-type cytochromes. Transiently binds heme delivered by CcmC and transfers the heme to apo-cytochromes in a process facilitated by CcmF and CcmH. The polypeptide is Cytochrome c-type biogenesis protein CcmE (Shewanella woodyi (strain ATCC 51908 / MS32)).